Here is a 406-residue protein sequence, read N- to C-terminus: Propionate kinase (406 aa).

The ATP site is built by N11 and K18. Position 11 (N11) interacts with Mg(2+). R86 is a binding site for substrate. The active-site Proton donor/acceptor is D143. ATP is bound by residues H175, 203 to 207 (HLGNG), 278 to 280 (DMR), and 326 to 330 (GIGEN).

It belongs to the acetokinase family. TdcD subfamily. In terms of assembly, homodimer. Requires Mg(2+) as cofactor.

It catalyses the reaction propanoate + ATP = propanoyl phosphate + ADP. Its pathway is amino-acid degradation; L-threonine degradation via propanoate pathway; propanoate from L-threonine: step 4/4. Catalyzes the conversion of propionyl phosphate and ADP to propionate and ATP. The protein is Propionate kinase of Yersinia enterocolitica serotype O:8 / biotype 1B (strain NCTC 13174 / 8081).